The primary structure comprises 428 residues: MRVVILGSGVVGVASAYYLARAGHEVTVIDREAGPALETSFANAGQISPGYAAPWAAPGVPLKAVKWMFEKHAPLAIRLDGTRFQLQWMYQMLRNCTAERYAVNKGRMVRLAEYSRDCLQALRADTGIQYEGRTGGTLQLFRTQQQLDGAAKDIAVLQEANVPFELLSPADLKKAEPALAAVSHKLTGGLRLPGDETGDCQLFTTRLAALAESLGVKFRYNTPIDALAIAGGKIAGVQCGSETVRADAYVVALGSYSTSFISNLMKIPVYPLKGYSITAPIVNEAAAPVSTVLDETYKIAITRFDQRIRVGGMAEIVGFDKKLRAARRETLEMCVNDLFPGGGDTSKATFWTGLRPMTPDGTPIVGRTPVSNLFLNTGHGTLGWTMSCGSGQLLADLISGKMPAIQADDLSVHRYLKDVAGQTRPAYA.

Position 3–17 (3–17 (VVILGSGVVGVASAY)) interacts with FAD.

It belongs to the DadA oxidoreductase family. The cofactor is FAD.

It carries out the reaction a D-alpha-amino acid + A + H2O = a 2-oxocarboxylate + AH2 + NH4(+). Its pathway is amino-acid degradation; D-alanine degradation; NH(3) and pyruvate from D-alanine: step 1/1. Its function is as follows. Oxidative deamination of D-amino acids. In Burkholderia lata (strain ATCC 17760 / DSM 23089 / LMG 22485 / NCIMB 9086 / R18194 / 383), this protein is D-amino acid dehydrogenase.